We begin with the raw amino-acid sequence, 390 residues long: MSSTTTNTTTATPAIQVNGNQSSSPQSPSSSTSTLSPPMSPSLLTRYREQKAVNKQIEKQLKEEKKIMDSELKLLLLGTGDSGKSTVVKQMKILHLEGYSQEERINQRQFVYRNIIEIAYSIIRGCGVLNLTIPSQFDSICSSIEEIYETKNYTNLDKNVLKGVAELSKNESFINAANNSGSNFQLHSSSQYFLDDIARFSEEDYIPTDQDILYTRVASTSVSETRFSVRGIKFRMIDVAGQRGHRDKWIHHFSEVTAILFVISLCEYDQVLEEDGKTNRMIESIKVFGDIINQRWFKDIPIILFLNKRDLFAEKIKKTGISICFPDYTGPSDDYEQSLVFLKKKILSANKTSKAVYTNVTTATDTTNIGHVFEAVKDILTRQTMEEGGI.

Low complexity-rich tracts occupy residues 1 to 12 (MSSTTTNTTTAT) and 22 to 42 (SSSP…MSPS). A disordered region spans residues 1–42 (MSSTTTNTTTATPAIQVNGNQSSSPQSPSSSTSTLSPPMSPS). The 321-residue stretch at 70–390 (SELKLLLLGT…TRQTMEEGGI (321 aa)) folds into the G-alpha domain. The tract at residues 73-86 (KLLLLGTGDSGKST) is G1 motif. GTP-binding positions include 78 to 85 (GTGDSGKS), 213 to 219 (LYTRVAS), 238 to 242 (DVAGQ), 307 to 310 (NKRD), and alanine 363. Serine 85 lines the Mg(2+) pocket. The segment at 211–219 (DILYTRVAS) is G2 motif. The segment at 234-243 (FRMIDVAGQR) is G3 motif. Residues 303–310 (ILFLNKRD) are G4 motif. A G5 motif region spans residues 361-366 (TTATDT).

Belongs to the G-alpha family. G proteins are composed of 3 units; alpha, beta and gamma. The alpha chain contains the guanine nucleotide binding site.

In terms of biological role, guanine nucleotide-binding proteins (G proteins) are involved as modulators or transducers in various transmembrane signaling systems. This Dictyostelium discoideum (Social amoeba) protein is Guanine nucleotide-binding protein alpha-7 subunit (gpaG).